A 146-amino-acid chain; its full sequence is Ribosome maturation factor RimP (146 aa).

It belongs to the RimP family.

The protein localises to the cytoplasm. Its function is as follows. Required for maturation of 30S ribosomal subunits. This chain is Ribosome maturation factor RimP, found in Dechloromonas aromatica (strain RCB).